We begin with the raw amino-acid sequence, 376 residues long: UDP-N-acetylglucosamine--N-acetylmuramyl-(pentapeptide) pyrophosphoryl-undecaprenol N-acetylglucosamine transferase (376 aa).

Residues 11 to 13 (TGG), Asn-117, Arg-160, Ser-208, and Gln-310 contribute to the UDP-N-acetyl-alpha-D-glucosamine site.

It belongs to the glycosyltransferase 28 family. MurG subfamily.

The protein localises to the cell inner membrane. It carries out the reaction di-trans,octa-cis-undecaprenyl diphospho-N-acetyl-alpha-D-muramoyl-L-alanyl-D-glutamyl-meso-2,6-diaminopimeloyl-D-alanyl-D-alanine + UDP-N-acetyl-alpha-D-glucosamine = di-trans,octa-cis-undecaprenyl diphospho-[N-acetyl-alpha-D-glucosaminyl-(1-&gt;4)]-N-acetyl-alpha-D-muramoyl-L-alanyl-D-glutamyl-meso-2,6-diaminopimeloyl-D-alanyl-D-alanine + UDP + H(+). The protein operates within cell wall biogenesis; peptidoglycan biosynthesis. In terms of biological role, cell wall formation. Catalyzes the transfer of a GlcNAc subunit on undecaprenyl-pyrophosphoryl-MurNAc-pentapeptide (lipid intermediate I) to form undecaprenyl-pyrophosphoryl-MurNAc-(pentapeptide)GlcNAc (lipid intermediate II). In Rickettsia massiliae (strain Mtu5), this protein is UDP-N-acetylglucosamine--N-acetylmuramyl-(pentapeptide) pyrophosphoryl-undecaprenol N-acetylglucosamine transferase.